The following is a 351-amino-acid chain: tRNA (guanine(26)-N(2))-dimethyltransferase (351 aa).

One can recognise a Trm1 methyltransferase domain in the interval 4–350; the sequence is VLRREGAVQF…AGYGEVKRAL (347 aa). Residues Arg39, Arg65, Asp83, Asp109, and Ala110 each contribute to the S-adenosyl-L-methionine site.

This sequence belongs to the class I-like SAM-binding methyltransferase superfamily. Trm1 family.

The catalysed reaction is guanosine(26) in tRNA + 2 S-adenosyl-L-methionine = N(2)-dimethylguanosine(26) in tRNA + 2 S-adenosyl-L-homocysteine + 2 H(+). Functionally, dimethylates a single guanine residue at position 26 of a number of tRNAs using S-adenosyl-L-methionine as donor of the methyl groups. The polypeptide is tRNA (guanine(26)-N(2))-dimethyltransferase (Pyrobaculum neutrophilum (strain DSM 2338 / JCM 9278 / NBRC 100436 / V24Sta) (Thermoproteus neutrophilus)).